The chain runs to 997 residues: Sorting nexin-19 (997 aa).

The PXA domain maps to 95–273 (ERQLEQEINR…ILVSIFSKYR (179 aa)). Disordered regions lie at residues 313-333 (SSPA…SPEI) and 413-437 (GALE…APGT). A compositionally biased stretch (acidic residues) spans 422–435 (GSECMEGAEAEEAP). The 131-residue stretch at 538 to 668 (LRITGTITAR…EFLALNTDAR (131 aa)) folds into the PX domain. R587 and R634 together coordinate a 1,2-diacyl-sn-glycero-3-phospho-(1D-myo-inositol-3-phosphate). Residues 697–728 (FPRSEPQSPTEELSEAENESKPQTEGKKASKS) form a disordered region. Residues 714 to 724 (NESKPQTEGKK) show a composition bias toward basic and acidic residues.

The protein belongs to the sorting nexin family. As to quaternary structure, interacts with PTPRN.

The protein localises to the early endosome membrane. Its subcellular location is the cytoplasmic vesicle membrane. Plays a role in intracellular vesicle trafficking and exocytosis. May play a role in maintaining insulin-containing dense core vesicles in pancreatic beta-cells and in preventing their degradation. May play a role in insulin secretion. Interacts with membranes containing phosphatidylinositol 3-phosphate (PtdIns(3P)). The chain is Sorting nexin-19 from Mus musculus (Mouse).